A 320-amino-acid polypeptide reads, in one-letter code: Malate dehydrogenase (320 aa).

Residues Gly10–Gly15 and Asp34 contribute to the NAD(+) site. Substrate-binding residues include Arg83 and Arg89. NAD(+) contacts are provided by residues Asn96 and Ile119–Asn121. Asn121 and Arg152 together coordinate substrate. Residue His176 is the Proton acceptor of the active site.

The protein belongs to the LDH/MDH superfamily. MDH type 3 family.

It carries out the reaction (S)-malate + NAD(+) = oxaloacetate + NADH + H(+). Catalyzes the reversible oxidation of malate to oxaloacetate. This is Malate dehydrogenase from Agrobacterium fabrum (strain C58 / ATCC 33970) (Agrobacterium tumefaciens (strain C58)).